The primary structure comprises 884 residues: DNA primase (884 aa).

The CHC2-type zinc-finger motif lies at 825–864 (CISSNHRNKTQSVRIFIVLYTNKKDEVTITLMSQCFAHKC).

This sequence belongs to the herpesviridae DNA primase family. Associates with the helicase and the primase-associated factor to form the helicase-primase factor.

The protein resides in the host nucleus. In terms of biological role, essential component of the helicase/primase complex. Unwinds the DNA at the replication forks and generates single-stranded DNA for both leading and lagging strand synthesis. The primase initiates primer synthesis and thereby produces large amount of short RNA primers on the lagging strand that the polymerase elongates using dNTPs. The polypeptide is DNA primase (56) (Equine herpesvirus 2 (strain 86/87) (EHV-2)).